The chain runs to 969 residues: RNA polymerase-associated protein RapA (969 aa).

Positions 164–334 (EVGRRHAPRV…FARLRLLDAD (171 aa)) constitute a Helicase ATP-binding domain. An ATP-binding site is contributed by 177–184 (DEVGLGKT). A DEAH box motif is present at residues 280-283 (DEAH). Positions 492 to 646 (RVNWLLEKVK…TCPTGRAVYD (155 aa)) constitute a Helicase C-terminal domain.

The protein belongs to the SNF2/RAD54 helicase family. RapA subfamily. As to quaternary structure, interacts with the RNAP. Has a higher affinity for the core RNAP than for the holoenzyme. Its ATPase activity is stimulated by binding to RNAP.

Functionally, transcription regulator that activates transcription by stimulating RNA polymerase (RNAP) recycling in case of stress conditions such as supercoiled DNA or high salt concentrations. Probably acts by releasing the RNAP, when it is trapped or immobilized on tightly supercoiled DNA. Does not activate transcription on linear DNA. Probably not involved in DNA repair. The protein is RNA polymerase-associated protein RapA of Vibrio cholerae serotype O1 (strain ATCC 39315 / El Tor Inaba N16961).